The following is a 194-amino-acid chain: Flavin prenyltransferase UbiX (194 aa).

Residues 9-11 (GAS), Ser35, 86-89 (SIKT), and Arg121 contribute to the FMN site. 2 residues coordinate dimethylallyl phosphate: Tyr151 and Lys167.

The protein belongs to the UbiX/PAD1 family.

The enzyme catalyses dimethylallyl phosphate + FMNH2 = prenylated FMNH2 + phosphate. Involved in the carboxylation of phenylphosphate. Functionally, flavin prenyltransferase that catalyzes the synthesis of the prenylated FMN cofactor (prenyl-FMN) for 4-hydroxy-3-polyprenylbenzoic acid decarboxylase UbiD. The prenyltransferase is metal-independent and links a dimethylallyl moiety from dimethylallyl monophosphate (DMAP) to the flavin N5 and C6 atoms of FMN. This chain is Flavin prenyltransferase UbiX, found in Thauera aromatica.